The following is an 88-amino-acid chain: Mini zinc finger protein 3 (88 aa).

A ZF-HD dimerization-type; degenerate zinc finger spans residues 26-72 (YVECQKNHAANIGGYAVDGCREFMASGGDDALTCAACGCHRNFHRRE).

In terms of assembly, homo- and heterodimers. Interacts with ZHD3, ZHD5, ZHD6, ZHD7, ZHD8, ZHD9, ZHD10 and ZHD13. As to expression, mostly expressed in roots, stems and flowers, present in seedlings and leaves, and weakly observed in inflorescence and siliques.

The protein resides in the cytoplasm. Its function is as follows. Inhibits zinc finger homeodomain (ZHD) transcription factors by interacting with them to prevent both their nuclear localization and their DNA-binding properties. Involved in integrating signals from multiple hormones by regulating the expression of specific genes. Promotes the formation of ectopic shoot meristems on leaf margins. This chain is Mini zinc finger protein 3 (MIF3), found in Arabidopsis thaliana (Mouse-ear cress).